We begin with the raw amino-acid sequence, 351 residues long: Putative phospho-N-acetylmuramoyl-pentapeptide-transferase (351 aa).

Transmembrane regions (helical) follow at residues 2 to 22, 44 to 64, 71 to 91, 158 to 178, 181 to 201, 212 to 232, 235 to 255, 258 to 278, 281 to 301, and 328 to 348; these read MEFL…TLFI, AGTP…VTVL, LVLT…DDLL, GEKI…GAVG, GGFY…VGAI, GMAA…LGLS, ALPF…NRHP, IFMG…AVML, TVYF…VSLL, and IVLL…YMTG.

Belongs to the glycosyltransferase 4 family. MraY subfamily. Requires Mg(2+) as cofactor.

Its subcellular location is the cell membrane. It catalyses the reaction UDP-N-acetyl-alpha-D-muramoyl-L-alanyl-gamma-D-glutamyl-meso-2,6-diaminopimeloyl-D-alanyl-D-alanine + di-trans,octa-cis-undecaprenyl phosphate = di-trans,octa-cis-undecaprenyl diphospho-N-acetyl-alpha-D-muramoyl-L-alanyl-D-glutamyl-meso-2,6-diaminopimeloyl-D-alanyl-D-alanine + UMP. In Methanothermobacter thermautotrophicus (strain ATCC 29096 / DSM 1053 / JCM 10044 / NBRC 100330 / Delta H) (Methanobacterium thermoautotrophicum), this protein is Putative phospho-N-acetylmuramoyl-pentapeptide-transferase.